A 310-amino-acid chain; its full sequence is Endo-1,4-beta-xylanase B (310 aa).

A signal peptide spans 1–19; sequence MISLSSVAIALTTVVGALA. The GH11 domain occupies 33–223; that stretch reads AITSSQTGTN…SSGSASMTVS (191 aa). Glutamate 119 serves as the catalytic Nucleophile. Catalysis depends on glutamate 210, which acts as the Proton donor. A compositionally biased stretch (low complexity) spans 218-227; that stretch reads ASMTVSAGSS. Residues 218–274 are disordered; the sequence is ASMTVSAGSSSSGGSGSGSGSGSGSGSGSGSQTTTAGSSTGTGTGSGSGSGSGGSGG. Residues 228–246 show a composition bias toward gly residues; sequence SSGGSGSGSGSGSGSGSGS. A compositionally biased stretch (low complexity) spans 247–256; that stretch reads GSQTTTAGSS. A compositionally biased stretch (gly residues) spans 257-274; it reads TGTGTGSGSGSGSGGSGG. The region spanning 275–310 is the CBM1 domain; the sequence is NCAAQWGQCGGQGWNGPTCCSSGTCKASNQWYSQCL.

This sequence belongs to the glycosyl hydrolase 11 (cellulase G) family.

It localises to the secreted. The catalysed reaction is Endohydrolysis of (1-&gt;4)-beta-D-xylosidic linkages in xylans.. The protein operates within glycan degradation; xylan degradation. Functionally, endo-1,4-beta-xylanase involved in the hydrolysis of xylan, a major structural heterogeneous polysaccharide found in plant biomass representing the second most abundant polysaccharide in the biosphere, after cellulose. Hydrolyzes birchwood xylan, beechwood xylan, and oat spelt xylan to produce short-chain xylooligosaccharides, xylopentaose, xylotriose, and xylobiose as the main products. This chain is Endo-1,4-beta-xylanase B (xynB), found in Penicillium oxalicum.